The sequence spans 128 residues: Sulfurtransferase TusD (128 aa).

Cys-78 functions as the Cysteine persulfide intermediate in the catalytic mechanism.

It belongs to the DsrE/TusD family. In terms of assembly, heterohexamer, formed by a dimer of trimers. The hexameric TusBCD complex contains 2 copies each of TusB, TusC and TusD. The TusBCD complex interacts with TusE.

It is found in the cytoplasm. Its function is as follows. Part of a sulfur-relay system required for 2-thiolation of 5-methylaminomethyl-2-thiouridine (mnm(5)s(2)U) at tRNA wobble positions. Accepts sulfur from TusA and transfers it in turn to TusE. This is Sulfurtransferase TusD from Shigella boydii serotype 18 (strain CDC 3083-94 / BS512).